A 100-amino-acid chain; its full sequence is Mitochondrial zinc maintenance protein 1, mitochondrial (100 aa).

This sequence belongs to the complex I LYR family. MZM1 subfamily. As to quaternary structure, interacts with RIP1.

The protein localises to the mitochondrion matrix. In terms of biological role, assembly factor required for Rieske Fe-S protein RIP1 incorporation into the cytochrome b-c1 (CIII) complex. Functions as a chaperone, binding to this subunit within the mitochondrial matrix and stabilizing it prior to its translocation and insertion into the late CIII dimeric intermediate within the mitochondrial inner membrane. Modulates the mitochondrial matrix zinc pool. The polypeptide is Mitochondrial zinc maintenance protein 1, mitochondrial (new18) (Schizosaccharomyces pombe (strain 972 / ATCC 24843) (Fission yeast)).